The sequence spans 189 residues: MGNKVVTFTEQELDDYQDCTFFTRKEILRVHKRFRELRPDLVPRQMTEGQASSVKVPCECIEKMPELRENPFRRRICEAFSRDGQGNLSFEDFLDALSVFSEQAPRDIKVFYAFKIYDFDQDGFIGHADLMSCLTTMTKNELSPEEHQQIADKVIEEADVDGDGKLSILEFEHVILRAPDFLSTFHIRI.

3 EF-hand domains span residues 68 to 103 (RENP…FSEQ), 105 to 140 (PRDI…MTKN), and 146 to 181 (EHQQ…APDF). Ca(2+)-binding residues include D118, D120, D122, D129, D159, D161, D163, K165, and E170.

As to quaternary structure, monomer. Homodimer.

Its subcellular location is the cytoplasm. Its function is as follows. Calcium- and integrin-binding protein. Plays a role in intracellular calcium homeostasis. Critical for proper photoreceptor cell maintenance and function. Required for prevention of light-dependent retinal degeneration. The polypeptide is Calcium and integrin-binding family member 2 (Drosophila melanogaster (Fruit fly)).